The primary structure comprises 811 residues: Ribosome biogenesis protein ERB1 (811 aa).

The span at 1 to 11 shows a compositional bias: polar residues; sequence MARNSKATDTP. The tract at residues 1 to 138 is disordered; sequence MARNSKATDT…VHTKFSDGRP (138 aa). The span at 27–96 shows a compositional bias: acidic residues; sequence EDAEESSSDE…LSDVDSEEFS (70 aa). A compositionally biased stretch (polar residues) spans 104 to 121; the sequence is ASITDKLSGTKIRSYSNA. The span at 128-138 shows a compositional bias: basic and acidic residues; sequence EVHTKFSDGRP. The tract at residues 270–386 is required for interaction with NOP7; that stretch reads RFVPSKHEAK…LRKVPGYQEG (117 aa). Residues 386 to 422 are required for interaction with YTM1; that stretch reads GLRERFERCLDLYLAPRTRHNKLNIDPDSLIPELPSP. 2 WD repeats span residues 438–477 and 485–525; these read GHTEKIRTLSISPDGLWLATGSDDGSVRIWEILTGRQVYK and NTDD…FDIE. A disordered region spans residues 547-566; the sequence is TKNSNIKVNSDDEDEEVEKA. WD repeat units follow at residues 595 to 637, 640 to 678, 681 to 720, 724 to 764, and 780 to 811; these read QCRK…SQSP, KSKGIIMDAKFHPFKPQLFVASQRYIRIYDLAQQVLVKK, PGARWLSNIDIHPRGDNLLASSYDKRVLWHDLDLSSTPYK, YHDK…DLMT, and INSLGVLDLVWHPKEAWLFSAGADGTARLWTT.

The protein belongs to the WD repeat BOP1/ERB1 family. Component of the NOP7 complex, composed of ERB1, NOP7 and YTM1. The complex is held together by ERB1, which interacts with NOP7 via its N-terminal domain and with YTM1 via a high-affinity interaction between the seven-bladed beta-propeller domains of the 2 proteins. The NOP7 complex associates with the 66S pre-ribosome.

It is found in the nucleus. The protein resides in the nucleolus. Its subcellular location is the nucleoplasm. Component of the NOP7 complex, which is required for maturation of the 25S and 5.8S ribosomal RNAs and formation of the 60S ribosome. This chain is Ribosome biogenesis protein ERB1, found in Debaryomyces hansenii (strain ATCC 36239 / CBS 767 / BCRC 21394 / JCM 1990 / NBRC 0083 / IGC 2968) (Yeast).